The sequence spans 393 residues: Ribonucleoside-diphosphate reductase subunit M2 (393 aa).

Ser18 is subject to Phosphoserine. Fe cation-binding residues include Asp142, Glu173, and His176. The active site involves Tyr180. 3 residues coordinate Fe cation: Glu236, Glu270, and His273.

This sequence belongs to the ribonucleoside diphosphate reductase small chain family. As to quaternary structure, heterodimer of a large and a small subunit. The cofactor is Fe cation.

It is found in the cytoplasm. The catalysed reaction is a 2'-deoxyribonucleoside 5'-diphosphate + [thioredoxin]-disulfide + H2O = a ribonucleoside 5'-diphosphate + [thioredoxin]-dithiol. Its function is as follows. Provides the precursors necessary for DNA synthesis. Catalyzes the biosynthesis of deoxyribonucleotides from the corresponding ribonucleotides. The protein is Ribonucleoside-diphosphate reductase subunit M2 (RnrS) of Drosophila melanogaster (Fruit fly).